The chain runs to 269 residues: Basic leucine zipper 19 (269 aa).

Residues 140–196 form the bZIP domain; the sequence is DPKRVKRILANRQSAQRSRVRKLQYISELERSVTTLQMEVSALSPRVAFLDHQRSLL. The interval 142–161 is basic motif; it reads KRVKRILANRQSAQRSRVRK. The tract at residues 168-196 is leucine-zipper; the sequence is LERSVTTLQMEVSALSPRVAFLDHQRSLL.

In terms of tissue distribution, expressed in roots and shoots.

The protein resides in the nucleus. Transcription regulator. The polypeptide is Basic leucine zipper 19 (BZIP19) (Oryza sativa subsp. japonica (Rice)).